The primary structure comprises 98 residues: NADH-ubiquinone oxidoreductase chain 4L (98 aa).

The next 3 membrane-spanning stretches (helical) occupy residues 1 to 21 (MSLTYMNMFMAFTISLLGLLL), 29 to 49 (SLLCLEGMMLSLFVMMTMVIL), and 61 to 81 (IILLVFAACEAALGLSLLVMV).

It belongs to the complex I subunit 4L family. As to quaternary structure, core subunit of respiratory chain NADH dehydrogenase (Complex I) which is composed of 45 different subunits.

The protein localises to the mitochondrion inner membrane. The enzyme catalyses a ubiquinone + NADH + 5 H(+)(in) = a ubiquinol + NAD(+) + 4 H(+)(out). In terms of biological role, core subunit of the mitochondrial membrane respiratory chain NADH dehydrogenase (Complex I) which catalyzes electron transfer from NADH through the respiratory chain, using ubiquinone as an electron acceptor. Part of the enzyme membrane arm which is embedded in the lipid bilayer and involved in proton translocation. The polypeptide is NADH-ubiquinone oxidoreductase chain 4L (MT-ND4L) (Platyrrhinus helleri (Heller's broad-nosed bat)).